The sequence spans 216 residues: Glycerol-3-phosphate acyltransferase (216 aa).

The next 5 helical transmembrane spans lie at 4–24 (IALGMIIFAYLCGSISSAILV), 56–76 (VAVLLFDILKGMLPVWIAYLL), 80–100 (PLYLGLTAIAACLGHIYPVFF), 112–132 (FGAIAPIGWDLTGLMTGTWLL), and 138–158 (GYSSLGAIVSALIAPFYVWWF).

Belongs to the PlsY family. In terms of assembly, probably interacts with PlsX.

Its subcellular location is the cell inner membrane. It catalyses the reaction an acyl phosphate + sn-glycerol 3-phosphate = a 1-acyl-sn-glycero-3-phosphate + phosphate. The protein operates within lipid metabolism; phospholipid metabolism. In terms of biological role, catalyzes the transfer of an acyl group from acyl-phosphate (acyl-PO(4)) to glycerol-3-phosphate (G3P) to form lysophosphatidic acid (LPA). This enzyme utilizes acyl-phosphate as fatty acyl donor, but not acyl-CoA or acyl-ACP. The chain is Glycerol-3-phosphate acyltransferase from Yersinia pseudotuberculosis serotype O:1b (strain IP 31758).